Here is a 211-residue protein sequence, read N- to C-terminus: Uracil phosphoribosyltransferase (211 aa).

5-phospho-alpha-D-ribose 1-diphosphate-binding positions include arginine 78, arginine 103, and aspartate 130–threonine 138. Residues isoleucine 195 and glycine 200 to alanine 202 contribute to the uracil site. Aspartate 201 serves as a coordination point for 5-phospho-alpha-D-ribose 1-diphosphate.

This sequence belongs to the UPRTase family. Mg(2+) is required as a cofactor.

It carries out the reaction UMP + diphosphate = 5-phospho-alpha-D-ribose 1-diphosphate + uracil. Its pathway is pyrimidine metabolism; UMP biosynthesis via salvage pathway; UMP from uracil: step 1/1. With respect to regulation, allosterically activated by GTP. Functionally, catalyzes the conversion of uracil and 5-phospho-alpha-D-ribose 1-diphosphate (PRPP) to UMP and diphosphate. This is Uracil phosphoribosyltransferase from Pseudarthrobacter chlorophenolicus (strain ATCC 700700 / DSM 12829 / CIP 107037 / JCM 12360 / KCTC 9906 / NCIMB 13794 / A6) (Arthrobacter chlorophenolicus).